A 400-amino-acid chain; its full sequence is Small ribosomal subunit protein bS1 (400 aa).

S1 motif domains lie at 17 to 87 (GDVV…VTYL), 107 to 173 (EEVV…LSRR), 194 to 262 (GDVV…LSLK), and 279 to 348 (GDVV…LSIK). Basic and acidic residues predominate over residues 351-366 (EERPAQEEGQKEEKRA). The segment at 351-400 (EERPAQEEGQKEEKRAARPRRPRRQEKRDFELPETQTGFSMADLFGDIEL) is disordered.

Belongs to the bacterial ribosomal protein bS1 family. Post-translationally, phosphorylated.

Binds mRNA; thus facilitating recognition of the initiation point. It is needed to translate mRNA with a short Shine-Dalgarno (SD) purine-rich sequence. This Streptococcus pneumoniae (strain ATCC BAA-255 / R6) protein is Small ribosomal subunit protein bS1 (rpsA).